Reading from the N-terminus, the 339-residue chain is Cyclin-D1-1 (339 aa).

Belongs to the cyclin family. Cyclin D subfamily. In terms of assembly, interacts with CDKA-1 and KRP6/ICK4. In terms of tissue distribution, expressed in roots, leaves and flowers.

May activate cell cycle in the root apical meristem (RAM) and promote embryonic root (radicle) protrusion. The chain is Cyclin-D1-1 (CYCD1-1) from Arabidopsis thaliana (Mouse-ear cress).